Here is a 621-residue protein sequence, read N- to C-terminus: Phytoene desaturase (621 aa).

A signal peptide spans 1–23; it reads MPSTSKRPTAIVIGSGVGGVSTA. Residues 394 to 425 form a disordered region; it reads HASQAHQLSASRNGHISSASPPDQPGLTPTEK. Over residues 397 to 414 the composition is skewed to polar residues; it reads QAHQLSASRNGHISSASP. A helical transmembrane segment spans residues 598–618; the sequence is WEQWVSVLIYLLVGIFAWLWM.

Belongs to the carotenoid/retinoid oxidoreductase family. The cofactor is NAD(+).

The protein resides in the membrane. It carries out the reaction 15-cis-phytoene + 5 A = all-trans-3,4-didehydrolycopene + 5 AH2. Its pathway is carotenoid biosynthesis; lycopene biosynthesis. In terms of biological role, phytoene desaturase involved in the carotenoid biosynthesis pathway. Converts phytoene into 3,4-didehydrolycopene via the intermediary of phytofluene, zeta-carotene, neurosporene and lycopene, by introducing up to five double bonds into phytoene. The polypeptide is Phytoene desaturase (PDH1) (Cercospora nicotianae (Barn spot disease fungus)).